Here is a 321-residue protein sequence, read N- to C-terminus: Cytochrome c biogenesis protein CcsA (321 aa).

The next 7 helical transmembrane spans lie at 9–29 (ILTH…LITL), 44–64 (GMIA…VSSG), 68–88 (LSNL…LHTI), 143–163 (MLLS…LLII), 225–245 (VISL…VWAN), 259–273 (TWAF…IYLH), and 288–308 (VASI…LLGI).

The protein belongs to the CcmF/CycK/Ccl1/NrfE/CcsA family. As to quaternary structure, may interact with Ccs1.

The protein localises to the plastid. Its subcellular location is the chloroplast thylakoid membrane. Required during biogenesis of c-type cytochromes (cytochrome c6 and cytochrome f) at the step of heme attachment. The polypeptide is Cytochrome c biogenesis protein CcsA (Zea mays (Maize)).